We begin with the raw amino-acid sequence, 381 residues long: Cytochrome P450 105C1 (381 aa).

Cysteine 330 contributes to the heme binding site.

Belongs to the cytochrome P450 family. Heme is required as a cofactor.

The protein resides in the cytoplasm. This Streptomyces sp protein is Cytochrome P450 105C1 (cyp105C1).